Consider the following 200-residue polypeptide: ATP-dependent Clp protease proteolytic subunit (200 aa).

Ser-102 (nucleophile) is an active-site residue. The active site involves His-127.

This sequence belongs to the peptidase S14 family. As to quaternary structure, fourteen ClpP subunits assemble into 2 heptameric rings which stack back to back to give a disk-like structure with a central cavity, resembling the structure of eukaryotic proteasomes.

The protein resides in the cytoplasm. The enzyme catalyses Hydrolysis of proteins to small peptides in the presence of ATP and magnesium. alpha-casein is the usual test substrate. In the absence of ATP, only oligopeptides shorter than five residues are hydrolyzed (such as succinyl-Leu-Tyr-|-NHMec, and Leu-Tyr-Leu-|-Tyr-Trp, in which cleavage of the -Tyr-|-Leu- and -Tyr-|-Trp bonds also occurs).. Functionally, cleaves peptides in various proteins in a process that requires ATP hydrolysis. Has a chymotrypsin-like activity. Plays a major role in the degradation of misfolded proteins. The protein is ATP-dependent Clp protease proteolytic subunit of Dehalococcoides mccartyi (strain ATCC BAA-2100 / JCM 16839 / KCTC 5957 / BAV1).